Reading from the N-terminus, the 173-residue chain is Microfibrillar-associated protein 5 (173 aa).

An N-terminal signal peptide occupies residues 1-21 (MSLLGPKVLLFLAAFIITSDW). The short motif at 30–32 (RGD) is the Cell attachment site element. Threonine 54 carries O-linked (GalNAc...) threonine glycosylation. Asparagine 79 carries an N-linked (GlcNAc...) asparagine glycan.

This sequence belongs to the MFAP family. Interacts with TGFB2. Interacts with BMP2. Interacts with FBN1 (via N-terminal domain) and FBN2. In terms of processing, forms intermolecular disulfide bonds either with other MAGP-2 molecules or with other components of the microfibrils. Post-translationally, N- and O-glycosylated. O-glycosylated with core 1 or possibly core 8 glycans. O-glycan heterogeneity at Thr-54: HexHexNAc (major) and HexHexNAc + sulfate (minor).

The protein resides in the secreted. It is found in the extracellular space. The protein localises to the extracellular matrix. May play a role in hematopoiesis. In the cardiovascular system, could regulate growth factors or participate in cell signaling in maintaining large vessel integrity. Component of the elastin-associated microfibrils. This Homo sapiens (Human) protein is Microfibrillar-associated protein 5 (MFAP5).